The sequence spans 194 residues: Holliday junction branch migration complex subunit RuvA (194 aa).

Positions Met1–Met63 are domain I. The interval Ser64–Leu142 is domain II. The tract at residues Phe143–Asp151 is flexible linker. Residues Asp151 to Lys194 form a domain III region.

This sequence belongs to the RuvA family. In terms of assembly, homotetramer. Forms an RuvA(8)-RuvB(12)-Holliday junction (HJ) complex. HJ DNA is sandwiched between 2 RuvA tetramers; dsDNA enters through RuvA and exits via RuvB. An RuvB hexamer assembles on each DNA strand where it exits the tetramer. Each RuvB hexamer is contacted by two RuvA subunits (via domain III) on 2 adjacent RuvB subunits; this complex drives branch migration. In the full resolvosome a probable DNA-RuvA(4)-RuvB(12)-RuvC(2) complex forms which resolves the HJ.

It is found in the cytoplasm. Its function is as follows. The RuvA-RuvB-RuvC complex processes Holliday junction (HJ) DNA during genetic recombination and DNA repair, while the RuvA-RuvB complex plays an important role in the rescue of blocked DNA replication forks via replication fork reversal (RFR). RuvA specifically binds to HJ cruciform DNA, conferring on it an open structure. The RuvB hexamer acts as an ATP-dependent pump, pulling dsDNA into and through the RuvAB complex. HJ branch migration allows RuvC to scan DNA until it finds its consensus sequence, where it cleaves and resolves the cruciform DNA. The protein is Holliday junction branch migration complex subunit RuvA of Alkaliphilus oremlandii (strain OhILAs) (Clostridium oremlandii (strain OhILAs)).